A 940-amino-acid chain; its full sequence is UvrABC system protein A (940 aa).

G31–S38 lines the ATP pocket. A C4-type zinc finger spans residues C253–C280. 2 consecutive ABC transporter domains span residues W310–L587 and A607–K937. G640 to S647 serves as a coordination point for ATP. The C4-type zinc-finger motif lies at C740 to C766.

This sequence belongs to the ABC transporter superfamily. UvrA family. Forms a heterotetramer with UvrB during the search for lesions. Interacts with TRCF (Mfd). UvrB and TRCF binding to UvrA could be mutually exclusive.

It is found in the cytoplasm. In terms of biological role, the UvrABC repair system catalyzes the recognition and processing of DNA lesions. UvrA is an ATPase and a DNA-binding protein. A damage recognition complex composed of 2 UvrA and 2 UvrB subunits scans DNA for abnormalities. When the presence of a lesion has been verified by UvrB, the UvrA molecules dissociate. This is UvrABC system protein A from Escherichia coli (strain K12).